The sequence spans 237 residues: DNA repair protein RecO (237 aa).

Belongs to the RecO family.

Involved in DNA repair and RecF pathway recombination. The polypeptide is DNA repair protein RecO (Rickettsia conorii (strain ATCC VR-613 / Malish 7)).